Reading from the N-terminus, the 222-residue chain is 25 kDa elongation factor 1-beta (222 aa).

A compositionally biased stretch (low complexity) spans 75-94; the sequence is TSASAPAKQAPKKAASAPAK. Residues 75-98 form a disordered region; sequence TSASAPAKQAPKKAASAPAKQADE.

This sequence belongs to the EF-1-beta/EF-1-delta family. EF-1 is composed of 4 subunits: alpha, beta, delta, and gamma.

Its function is as follows. EF-1-beta and EF-1-delta stimulate the exchange of GDP bound to EF-1-alpha to GTP. The sequence is that of 25 kDa elongation factor 1-beta from Trypanosoma cruzi.